A 384-amino-acid chain; its full sequence is Acetylornithine aminotransferase (384 aa).

Residues glycine 95–alanine 96 and phenylalanine 122 contribute to the pyridoxal 5'-phosphate site. Arginine 125 is a N(2)-acetyl-L-ornithine binding site. A pyridoxal 5'-phosphate-binding site is contributed by aspartate 207 to glutamine 210. N6-(pyridoxal phosphate)lysine is present on lysine 236. Serine 264 contributes to the N(2)-acetyl-L-ornithine binding site. Threonine 265 provides a ligand contact to pyridoxal 5'-phosphate.

This sequence belongs to the class-III pyridoxal-phosphate-dependent aminotransferase family. ArgD subfamily. Homodimer. Pyridoxal 5'-phosphate serves as cofactor.

The protein localises to the cytoplasm. The catalysed reaction is N(2)-acetyl-L-ornithine + 2-oxoglutarate = N-acetyl-L-glutamate 5-semialdehyde + L-glutamate. Its pathway is amino-acid biosynthesis; L-arginine biosynthesis; N(2)-acetyl-L-ornithine from L-glutamate: step 4/4. The chain is Acetylornithine aminotransferase from Halalkalibacterium halodurans (strain ATCC BAA-125 / DSM 18197 / FERM 7344 / JCM 9153 / C-125) (Bacillus halodurans).